The chain runs to 284 residues: Putative ABC transporter ATP-binding protein sll0385 (284 aa).

The ABC transporter domain maps to 51 to 278 (IRVRELSFAY…QTLMESHGLE (228 aa)). ATP is bound at residue 84 to 91 (GHNGCGKT).

This sequence belongs to the ABC transporter superfamily.

The protein localises to the cell inner membrane. Probably part of an ABC transporter complex. Responsible for energy coupling to the transport system. The protein is Putative ABC transporter ATP-binding protein sll0385 of Synechocystis sp. (strain ATCC 27184 / PCC 6803 / Kazusa).